The following is a 158-amino-acid chain: G-protein-signaling modulator 3 (158 aa).

Residues 1–53 (MEAERPQEDGEQSLPQDDQGWPPVNSTARPWRSAPPSPPPPGTRHTALGPRSG) form a disordered region. 2 positions are modified to phosphoserine: serine 33 and serine 37. The span at 33–42 (SAPPSPPPPG) shows a compositional bias: pro residues. A compositionally biased stretch (low complexity) spans 43–53 (TRHTALGPRSG). Phosphoserine is present on residues serine 54 and serine 57. At threonine 60 the chain carries Phosphothreonine. The region spanning 60–82 (TELLLDLVAEAQSRRLEEQRAAF) is the GoLoco 1 domain. Positions 78–97 (QRAAFHTPKVPPSLAPTPPR) are disordered. The span at 86-96 (KVPPSLAPTPP) shows a compositional bias: pro residues. 2 consecutive GoLoco domains span residues 102–124 (KEQL…RSDP) and 130–153 (GQEL…RSRP).

Its subcellular location is the cytoplasm. Its function is as follows. Interacts with subunit of G(i) alpha proteins and regulates the activation of G(i) alpha proteins. This is G-protein-signaling modulator 3 (Gpsm3) from Rattus norvegicus (Rat).